A 797-amino-acid chain; its full sequence is Kinesin-like protein Klp68D (797 aa).

The region spanning 19 to 344 (CVQVVVRCRP…LRYASRAKSI (326 aa)) is the Kinesin motor domain. ATP is bound at residue 106-113 (GQTGTGKT). Positions 350–384 (KNEDPQDAKLKEYQEEIERLKRLIAPQQQQRSEKQ) form a coiled coil. 3 disordered regions span residues 371–450 (RLIA…ELER), 610–656 (SSFP…PSSL), and 722–797 (ANSS…LVNK). Residues 386–396 (TIKKQRVKKPK) are compositionally biased toward basic residues. A compositionally biased stretch (acidic residues) spans 417–431 (QVDEDRDSDGDGAES). A compositionally biased stretch (basic and acidic residues) spans 432 to 450 (ESDKENEAEVAKSNEELER). The stretch at 432–580 (ESDKENEAEV…LVKELKRQLL (149 aa)) forms a coiled coil. Residues 626 to 638 (GYRRPVSHPQRRR) are compositionally biased toward basic residues. Over residues 782–791 (KKPASAYPKA) the composition is skewed to low complexity.

This sequence belongs to the TRAFAC class myosin-kinesin ATPase superfamily. Kinesin family. Kinesin II subfamily.

It is found in the cytoplasm. The protein localises to the cytoskeleton. Its function is as follows. Plus-end directed microtubule motor that may be used for anterograde axonal transport and could conceivably move cargos in fly neurons different than those moved by kinesin heavy chain or other plus-end directed motors. This Drosophila pseudoobscura pseudoobscura (Fruit fly) protein is Kinesin-like protein Klp68D.